The following is a 353-amino-acid chain: tRNA pseudouridine synthase B (353 aa).

The Nucleophile role is filled by Asp39.

It belongs to the pseudouridine synthase TruB family. Type 1 subfamily.

The catalysed reaction is uridine(55) in tRNA = pseudouridine(55) in tRNA. Its function is as follows. Responsible for synthesis of pseudouridine from uracil-55 in the psi GC loop of transfer RNAs. In Wolbachia pipientis subsp. Culex pipiens (strain wPip), this protein is tRNA pseudouridine synthase B.